The primary structure comprises 948 residues: Probable DNA-directed RNA polymerase (948 aa).

Residues aspartate 600, lysine 680, and aspartate 853 contribute to the active site.

The protein belongs to the phage and mitochondrial RNA polymerase family.

It is found in the mitochondrion. It carries out the reaction RNA(n) + a ribonucleoside 5'-triphosphate = RNA(n+1) + diphosphate. DNA-dependent RNA polymerase catalyzes the transcription of DNA into RNA using the four ribonucleoside triphosphates as substrates. This chain is Probable DNA-directed RNA polymerase, found in Podospora anserina (Pleurage anserina).